We begin with the raw amino-acid sequence, 423 residues long: Glucose-1-phosphate adenylyltransferase (423 aa).

Alpha-D-glucose 1-phosphate contacts are provided by residues Tyr107, Gly172, 187-188 (EK), and Ser205.

The protein belongs to the bacterial/plant glucose-1-phosphate adenylyltransferase family. In terms of assembly, homotetramer.

It carries out the reaction alpha-D-glucose 1-phosphate + ATP + H(+) = ADP-alpha-D-glucose + diphosphate. It participates in glycan biosynthesis; glycogen biosynthesis. Its function is as follows. Involved in the biosynthesis of ADP-glucose, a building block required for the elongation reactions to produce glycogen. Catalyzes the reaction between ATP and alpha-D-glucose 1-phosphate (G1P) to produce pyrophosphate and ADP-Glc. The sequence is that of Glucose-1-phosphate adenylyltransferase from Cereibacter sphaeroides (strain ATCC 17025 / ATH 2.4.3) (Rhodobacter sphaeroides).